The primary structure comprises 358 residues: NADH-quinone oxidoreductase subunit H (358 aa).

8 helical membrane-spanning segments follow: residues 30–50 (IAVG…LIYM), 96–116 (FLYN…FACI), 129–149 (VGVF…LLAG), 168–188 (IISY…LMGT), 201–221 (GWFI…YLIA), 265–285 (FIVA…LHII), 297–317 (IPGF…LMWI), and 336–356 (YLVP…AFGF).

It belongs to the complex I subunit 1 family. In terms of assembly, NDH-1 is composed of 14 different subunits. Subunits NuoA, H, J, K, L, M, N constitute the membrane sector of the complex.

The protein localises to the cell inner membrane. It catalyses the reaction a quinone + NADH + 5 H(+)(in) = a quinol + NAD(+) + 4 H(+)(out). Its function is as follows. NDH-1 shuttles electrons from NADH, via FMN and iron-sulfur (Fe-S) centers, to quinones in the respiratory chain. The immediate electron acceptor for the enzyme in this species is believed to be ubiquinone. Couples the redox reaction to proton translocation (for every two electrons transferred, four hydrogen ions are translocated across the cytoplasmic membrane), and thus conserves the redox energy in a proton gradient. This subunit may bind ubiquinone. The sequence is that of NADH-quinone oxidoreductase subunit H from Bacteroides thetaiotaomicron (strain ATCC 29148 / DSM 2079 / JCM 5827 / CCUG 10774 / NCTC 10582 / VPI-5482 / E50).